A 253-amino-acid chain; its full sequence is Small ribosomal subunit protein uS3 (253 aa).

Positions 39–109 (IRNYVLARLK…EVKIDVVEVI (71 aa)) constitute a KH type-2 domain. The disordered stretch occupies residues 220–253 (DEMKKMKDRRNDGGAKGRDSRDNRSKRRSRSKRS). The span at 221 to 242 (EMKKMKDRRNDGGAKGRDSRDN) shows a compositional bias: basic and acidic residues. Basic residues predominate over residues 243 to 253 (RSKRRSRSKRS).

Belongs to the universal ribosomal protein uS3 family. Part of the 30S ribosomal subunit. Forms a tight complex with proteins S10 and S14.

Functionally, binds the lower part of the 30S subunit head. Binds mRNA in the 70S ribosome, positioning it for translation. In Chlorobium chlorochromatii (strain CaD3), this protein is Small ribosomal subunit protein uS3.